The following is a 332-amino-acid chain: Ferredoxin--NADP reductase 1 (332 aa).

FAD is bound by residues Asp35, Lys43, Phe48, Val88, Phe123, Asp284, and Thr325.

The protein belongs to the ferredoxin--NADP reductase type 2 family. As to quaternary structure, homodimer. FAD serves as cofactor.

It carries out the reaction 2 reduced [2Fe-2S]-[ferredoxin] + NADP(+) + H(+) = 2 oxidized [2Fe-2S]-[ferredoxin] + NADPH. The chain is Ferredoxin--NADP reductase 1 from Listeria monocytogenes serotype 4b (strain F2365).